A 405-amino-acid polypeptide reads, in one-letter code: Solute carrier family 35 member E2B (405 aa).

Residues 1-28 (MSSSVKTPALEELVPGSEEKPKGRSPLS) are disordered. 10 helical membrane-spanning segments follow: residues 81-101 (LWFF…SLLG), 106-126 (MLGA…TLVP), 142-162 (FLMT…LGLV), 167-187 (VAVS…VIMS), 195-215 (TGLL…LCTA), 219-241 (SFNV…QNVF), 264-284 (AAAV…PVIG), 296-316 (VVLL…TAYA), 326-346 (FSVA…IVFG), and 347-367 (NKIT…VLLY). The interval 380 to 405 (SLAAATGRAPDDTVEPLLPQDPRQHP) is disordered.

It belongs to the TPT transporter family. SLC35E subfamily.

Its subcellular location is the membrane. Putative transporter. The polypeptide is Solute carrier family 35 member E2B (SLC35E2B) (Homo sapiens (Human)).